We begin with the raw amino-acid sequence, 360 residues long: C-X-C chemokine receptor type 2 (360 aa).

The Extracellular segment spans residues 1-48 (MEDFNMESDSFEDFWKGEDLSNYSYSSTLPPFLLDAAPCEPESLEINK). N-linked (GlcNAc...) asparagine glycosylation is present at asparagine 22. A helical transmembrane segment spans residues 49 to 75 (YFVVIIYALVFLLSLLGNSLVMLVILY). Over 76–84 (SRVGRSVTD) the chain is Cytoplasmic. The chain crosses the membrane as a helical span at residues 85-105 (VYLLNLALADLLFALTLPIWA). The Extracellular segment spans residues 106-120 (ASKVNGWIFGTFLCK). Cysteine 119 and cysteine 196 are disulfide-bonded. The chain crosses the membrane as a helical span at residues 121 to 142 (VVSLLKEVNFYSGILLLACISV). Residues 143 to 163 (DRYLAIVHATRTLTQKRYLVK) are Cytoplasmic-facing. A helical transmembrane segment spans residues 164–183 (FICLSIWGLSLLLALPVLLF). Topologically, residues 184 to 208 (RRTVYSSNVSPACYEDMGNNTANWR) are extracellular. Residues 209-231 (MLLRILPQSFGFIVPLLIMLFCY) traverse the membrane as a helical segment. Residues 232–251 (GFTLRTLFKAHMGQKHRAMR) are Cytoplasmic-facing. The chain crosses the membrane as a helical span at residues 252 to 273 (VIFAVVLIFLLCWLPYNLVLLA). At 274–294 (DTLMRTQVIQETCERRNHIDR) the chain is on the extracellular side. The chain crosses the membrane as a helical span at residues 295 to 315 (ALDATEILGILHSCLNPLIYA). The Cytoplasmic portion of the chain corresponds to 316–360 (FIGQKFRHGLLKILAIHGLISKDSLPKDSRPSFVGSSSGHTSTTL). 4 positions are modified to phosphoserine: serine 347, serine 351, serine 352, and serine 353.

Belongs to the G-protein coupled receptor 1 family. In terms of assembly, interacts with IL8. Interacts with GNAI2. Phosphorylated upon ligand binding; which is required for desensitization. Post-translationally, (Microbial infection) Proteolytically cleaved by Staphylococcus aureus staphopain A/SspP. This cleavage inhibits CXCR2-dependent neutrophil activation and chemotaxis.

It is found in the cell membrane. In terms of biological role, receptor for interleukin-8 which is a powerful neutrophil chemotactic factor. Binding of IL-8 to the receptor causes activation of neutrophils. This response is mediated via a G-protein that activates a phosphatidylinositol-calcium second messenger system. Binds to IL-8 with high affinity. Also binds with high affinity to CXCL3, GRO/MGSA and NAP-2. The sequence is that of C-X-C chemokine receptor type 2 (CXCR2) from Homo sapiens (Human).